The sequence spans 236 residues: Phosphoserine phosphatase (236 aa).

The active-site Nucleophile is Asp-30. Mg(2+) contacts are provided by Asp-30 and Asp-32. The active-site Proton donor is Asp-32. Residues Glu-39, Arg-76, 120 to 121 (SG), and Lys-169 each bind substrate. A Mg(2+)-binding site is contributed by Asp-192. A substrate-binding site is contributed by Asn-195.

The protein belongs to the HAD-like hydrolase superfamily. SerB family. Mg(2+) serves as cofactor.

The enzyme catalyses O-phospho-L-serine + H2O = L-serine + phosphate. It carries out the reaction O-phospho-D-serine + H2O = D-serine + phosphate. Its pathway is amino-acid biosynthesis; L-serine biosynthesis; L-serine from 3-phospho-D-glycerate: step 3/3. The sequence is that of Phosphoserine phosphatase from Polaromonas sp. (strain JS666 / ATCC BAA-500).